The primary structure comprises 112 residues: Large ribosomal subunit protein eL36y (112 aa).

Over residues 79-88 (KLGTHKRAKR) the composition is skewed to basic residues. Residues 79–112 (KLGTHKRAKRKREEMSSVLRKMRSGGGGATEKKK) are disordered. A compositionally biased stretch (gly residues) spans 102–112 (SGGGGATEKKK).

The protein belongs to the eukaryotic ribosomal protein eL36 family.

In Arabidopsis thaliana (Mouse-ear cress), this protein is Large ribosomal subunit protein eL36y (RPL36B).